The primary structure comprises 222 residues: 2-C-methyl-D-erythritol 4-phosphate cytidylyltransferase (222 aa).

Belongs to the IspD/TarI cytidylyltransferase family. IspD subfamily.

The enzyme catalyses 2-C-methyl-D-erythritol 4-phosphate + CTP + H(+) = 4-CDP-2-C-methyl-D-erythritol + diphosphate. The protein operates within isoprenoid biosynthesis; isopentenyl diphosphate biosynthesis via DXP pathway; isopentenyl diphosphate from 1-deoxy-D-xylulose 5-phosphate: step 2/6. Catalyzes the formation of 4-diphosphocytidyl-2-C-methyl-D-erythritol from CTP and 2-C-methyl-D-erythritol 4-phosphate (MEP). The protein is 2-C-methyl-D-erythritol 4-phosphate cytidylyltransferase of Porphyromonas gingivalis (strain ATCC BAA-308 / W83).